A 154-amino-acid polypeptide reads, in one-letter code: Transcriptional repressor NrdR (154 aa).

Residues 3 to 34 fold into a zinc finger; the sequence is CPFCGNVDTQVKDSRPAEDNVAIRRRRFCPAC. Residues 49–139 form the ATP-cone domain; the sequence is LVVVKSSGRR…VYKNFQAADD (91 aa).

This sequence belongs to the NrdR family. Requires Zn(2+) as cofactor.

Its function is as follows. Negatively regulates transcription of bacterial ribonucleotide reductase nrd genes and operons by binding to NrdR-boxes. This chain is Transcriptional repressor NrdR, found in Paracoccus denitrificans (strain Pd 1222).